The primary structure comprises 918 residues: Signal transduction histidine-protein kinase BarA (918 aa).

Residues methionine 1–arginine 9 are Cytoplasmic-facing. The chain crosses the membrane as a helical span at residues methionine 10–valine 31. Residues histidine 32–glutamate 176 are Periplasmic-facing. Residues isoleucine 177 to tryptophan 196 form a helical membrane-spanning segment. Over arginine 197–glycine 918 the chain is Cytoplasmic. In terms of domain architecture, HAMP spans arginine 200–glutamate 252. The region spanning asparagine 299–leucine 520 is the Histidine kinase domain. Phosphohistidine; by autocatalysis is present on histidine 302. One can recognise a Response regulatory domain in the interval threonine 669–lysine 785. Aspartate 718 carries the 4-aspartylphosphate modification. The HPt domain maps to lysine 822–glycine 918. The residue at position 861 (histidine 861) is a Phosphohistidine.

In terms of processing, activation requires a sequential transfer of a phosphate group from a His in the primary transmitter domain, to an Asp in the receiver domain and to a His in the secondary transmitter domain.

The protein localises to the cell inner membrane. It carries out the reaction ATP + protein L-histidine = ADP + protein N-phospho-L-histidine.. Member of the two-component regulatory system UvrY/BarA involved in the regulation of carbon metabolism via the CsrA/CsrB regulatory system. Phosphorylates UvrY, probably via a four-step phosphorelay. This is Signal transduction histidine-protein kinase BarA (barA) from Escherichia coli O157:H7.